The sequence spans 425 residues: UDP-N-acetylglucosamine 1-carboxyvinyltransferase (425 aa).

Residue 25–26 (KN) coordinates phosphoenolpyruvate. Arg95 serves as a coordination point for UDP-N-acetyl-alpha-D-glucosamine. Cys119 (proton donor) is an active-site residue. 2-(S-cysteinyl)pyruvic acid O-phosphothioketal is present on Cys119. UDP-N-acetyl-alpha-D-glucosamine contacts are provided by residues 124–128 (RPVDQ), Asp306, and Ile328.

It belongs to the EPSP synthase family. MurA subfamily.

Its subcellular location is the cytoplasm. It catalyses the reaction phosphoenolpyruvate + UDP-N-acetyl-alpha-D-glucosamine = UDP-N-acetyl-3-O-(1-carboxyvinyl)-alpha-D-glucosamine + phosphate. It functions in the pathway cell wall biogenesis; peptidoglycan biosynthesis. Functionally, cell wall formation. Adds enolpyruvyl to UDP-N-acetylglucosamine. The sequence is that of UDP-N-acetylglucosamine 1-carboxyvinyltransferase from Thermus thermophilus (strain ATCC BAA-163 / DSM 7039 / HB27).